A 440-amino-acid polypeptide reads, in one-letter code: Beta-1,3-galactosyl-O-glycosyl-glycoprotein beta-1,6-N-acetylglucosaminyltransferase 3 (440 aa).

Topologically, residues 1 to 12 (MKMTGWKKKLCR) are cytoplasmic. Residues 13-30 (GHHLWALGCYMLLAVVAL) form a helical; Signal-anchor for type II membrane protein membrane-spanning segment. Residues 31 to 440 (RLSLRLKCDV…RHKAIYGTEL (410 aa)) are Lumenal-facing. Asparagine 72 and asparagine 108 each carry an N-linked (GlcNAc...) asparagine glycan. 4 cysteine pairs are disulfide-bonded: cysteine 73–cysteine 230, cysteine 164–cysteine 384, cysteine 185–cysteine 212, and cysteine 393–cysteine 425.

This sequence belongs to the glycosyltransferase 14 family. N-glycosylated. Primarily expressed in mucus-secreting tissues.

It is found in the golgi apparatus membrane. It catalyses the reaction a 3-O-[beta-D-galactosyl-(1-&gt;3)-N-acetyl-alpha-D-galactosaminyl]-L-seryl-[protein] + UDP-N-acetyl-alpha-D-glucosamine = 3-O-{beta-D-galactosyl-(1-&gt;3)-[N-acetyl-beta-D-glucosaminyl-(1-&gt;6)]-N-acetyl-alpha-D-galactosaminyl}-L-seryl-[protein] + UDP + H(+). It carries out the reaction a 3-O-[beta-D-galactosyl-(1-&gt;3)-N-acetyl-alpha-D-galactosaminyl]-L-threonyl-[protein] + UDP-N-acetyl-alpha-D-glucosamine = a 3-O-{beta-D-galactosyl-(1-&gt;3)-[N-acetyl-beta-D-glucosaminyl-(1-&gt;6)]-N-acetyl-alpha-D-galactosaminyl}-L-threonyl-[protein] + UDP + H(+). The catalysed reaction is a beta-D-Gal-(1-&gt;4)-beta-D-GlcNAc-(1-&gt;3)-beta-D-Gal-(1-&gt;4)-beta-D-GlcNAc derivative + UDP-N-acetyl-alpha-D-glucosamine = a beta-D-Gal-(1-&gt;4)-beta-D-GlcNAc-(1-&gt;3)-[beta-D-GlcNAc-(1-&gt;6)]-beta-D-Gal-(1-&gt;4)-N-acetyl-beta-D-glucosaminyl derivative + UDP + H(+). The enzyme catalyses 3-O-[N-acetyl-beta-D-glucosaminyl-(1-&gt;3)-N-acetyl-alpha-D-galactosaminyl]-L-seryl-[protein] + UDP-N-acetyl-alpha-D-glucosamine = 3-O-[N-acetyl-beta-D-glucosaminyl-(1-&gt;3)-[N-acetyl-beta-D-glucosaminyl-(1-&gt;6)]-N-acetyl-alpha-D-galactosaminyl]-L-seryl-[protein] + UDP + H(+). It catalyses the reaction a 3-O-[N-acetyl-beta-D-glucosaminyl-(1-&gt;3)-N-acetyl-alpha-D-galactosaminyl]-L-threonyl-[protein] + UDP-N-acetyl-alpha-D-glucosamine = 3-O-[N-acetyl-beta-D-glucosaminyl-(1-&gt;3)-[N-acetyl-beta-D-glucosaminyl-(1-&gt;6)]-N-acetyl-alpha-D-galactosaminyl]-L-threonyl-[protein] + UDP + H(+). The protein operates within protein modification; protein glycosylation. Functionally, glycosyltransferase that can synthesize all known mucin beta 6 N-acetylglucosaminides. Mediates core 2 and core 4 O-glycan branching, 2 important steps in mucin-type biosynthesis. Also has I-branching enzyme activity by converting linear into branched poly-N-acetyllactosaminoglycans, leading to introduce the blood group I antigen during embryonic development. This chain is Beta-1,3-galactosyl-O-glycosyl-glycoprotein beta-1,6-N-acetylglucosaminyltransferase 3 (GCNT3), found in Bos taurus (Bovine).